The following is a 78-amino-acid chain: DNA-directed RNA polymerase subunit Rpo5 (78 aa).

It belongs to the archaeal Rpo5/eukaryotic RPB5 RNA polymerase subunit family. As to quaternary structure, part of the RNA polymerase complex.

The protein resides in the cytoplasm. The enzyme catalyses RNA(n) + a ribonucleoside 5'-triphosphate = RNA(n+1) + diphosphate. Functionally, DNA-dependent RNA polymerase (RNAP) catalyzes the transcription of DNA into RNA using the four ribonucleoside triphosphates as substrates. The chain is DNA-directed RNA polymerase subunit Rpo5 from Methanosarcina mazei (strain ATCC BAA-159 / DSM 3647 / Goe1 / Go1 / JCM 11833 / OCM 88) (Methanosarcina frisia).